Reading from the N-terminus, the 206-residue chain is dITP/XTP pyrophosphatase (206 aa).

10–15 contributes to the substrate binding site; the sequence is SRNAKK. The active-site Proton acceptor is the Asp-75. Asp-75 is a binding site for Mg(2+). Substrate contacts are provided by residues Ser-76, 158–161, Lys-181, and 186–187; these read FGYD and HR.

The protein belongs to the HAM1 NTPase family. In terms of assembly, homodimer. The cofactor is Mg(2+).

It carries out the reaction XTP + H2O = XMP + diphosphate + H(+). The catalysed reaction is dITP + H2O = dIMP + diphosphate + H(+). The enzyme catalyses ITP + H2O = IMP + diphosphate + H(+). Its function is as follows. Pyrophosphatase that catalyzes the hydrolysis of nucleoside triphosphates to their monophosphate derivatives, with a high preference for the non-canonical purine nucleotides XTP (xanthosine triphosphate), dITP (deoxyinosine triphosphate) and ITP. Seems to function as a house-cleaning enzyme that removes non-canonical purine nucleotides from the nucleotide pool, thus preventing their incorporation into DNA/RNA and avoiding chromosomal lesions. The polypeptide is dITP/XTP pyrophosphatase (Nocardia farcinica (strain IFM 10152)).